A 520-amino-acid polypeptide reads, in one-letter code: Protein OS-9 homolog (520 aa).

An N-terminal signal peptide occupies residues 1-23; sequence MIRRIRTLTPLLVLACAGSGAWA. Residues 121–135 show a composition bias toward polar residues; sequence QVDNGNRDQTNGAES. The tract at residues 121 to 144 is disordered; the sequence is QVDNGNRDQTNGAESTSKEDEQRE. The MRH domain occupies 161–302; that stretch reads GKCMYYISGW…VIYTPRLCND (142 aa). The cysteines at positions 163 and 176 are disulfide-linked. The a mannooligosaccharide derivative site is built by Trp-170, Trp-171, Gln-183, Asp-257, Arg-263, Glu-284, and Tyr-290. 2 cysteine pairs are disulfide-bonded: Cys-256-Cys-288 and Cys-271-Cys-300. The segment at 442 to 520 is disordered; the sequence is GLVGTVDSND…SEEIFFKDEL (79 aa). Polar residues predominate over residues 461–471; it reads GSISQPAQGTT. A compositionally biased stretch (basic and acidic residues) spans 473–499; sequence DKGESNAETGEEKKKADEKIDHYEPEK. The Prevents secretion from ER signature appears at 517–520; sequence KDEL.

It belongs to the OS-9 family. Interacts with missfolded ER lumenal proteins.

Its subcellular location is the endoplasmic reticulum membrane. Its function is as follows. Lectin involved in the quality control of the secretory pathway. As a member of the endoplasmic reticulum-associated degradation lumenal (ERAD-L) surveillance system, targets misfolded endoplasmic reticulum lumenal glycoproteins for degradation. This chain is Protein OS-9 homolog (yos9), found in Aspergillus fumigatus (strain ATCC MYA-4609 / CBS 101355 / FGSC A1100 / Af293) (Neosartorya fumigata).